Reading from the N-terminus, the 451-residue chain is Trigger factor (451 aa).

A PPIase FKBP-type domain is found at 173-258; sequence GDRVTLDFVG…LKKIEWAHLP (86 aa).

It belongs to the FKBP-type PPIase family. Tig subfamily.

It localises to the cytoplasm. It catalyses the reaction [protein]-peptidylproline (omega=180) = [protein]-peptidylproline (omega=0). In terms of biological role, involved in protein export. Acts as a chaperone by maintaining the newly synthesized protein in an open conformation. Functions as a peptidyl-prolyl cis-trans isomerase. The sequence is that of Trigger factor from Cupriavidus pinatubonensis (strain JMP 134 / LMG 1197) (Cupriavidus necator (strain JMP 134)).